The primary structure comprises 388 residues: Alanine racemase 2 (388 aa).

Catalysis depends on K39, which acts as the Proton acceptor; specific for D-alanine. The residue at position 39 (K39) is an N6-(pyridoxal phosphate)lysine. R137 is a binding site for substrate. The active-site Proton acceptor; specific for L-alanine is Y267. M315 contacts substrate.

This sequence belongs to the alanine racemase family. Requires pyridoxal 5'-phosphate as cofactor.

The enzyme catalyses L-alanine = D-alanine. It functions in the pathway amino-acid biosynthesis; D-alanine biosynthesis; D-alanine from L-alanine: step 1/1. Its function is as follows. Catalyzes the interconversion of L-alanine and D-alanine. May also act on other amino acids. The sequence is that of Alanine racemase 2 (alr2) from Caldanaerobacter subterraneus subsp. tengcongensis (strain DSM 15242 / JCM 11007 / NBRC 100824 / MB4) (Thermoanaerobacter tengcongensis).